We begin with the raw amino-acid sequence, 235 residues long: Segregation and condensation protein A (235 aa).

Belongs to the ScpA family. Component of a cohesin-like complex composed of ScpA, ScpB and the Smc homodimer, in which ScpA and ScpB bind to the head domain of Smc. The presence of the three proteins is required for the association of the complex with DNA.

It localises to the cytoplasm. Participates in chromosomal partition during cell division. May act via the formation of a condensin-like complex containing Smc and ScpB that pull DNA away from mid-cell into both cell halves. The chain is Segregation and condensation protein A from Streptococcus mutans serotype c (strain ATCC 700610 / UA159).